A 260-amino-acid chain; its full sequence is 14-3-3-like protein (260 aa).

It belongs to the 14-3-3 family.

In Pisum sativum (Garden pea), this protein is 14-3-3-like protein.